The primary structure comprises 512 residues: GMP synthase [glutamine-hydrolyzing] (512 aa).

The Glutamine amidotransferase type-1 domain occupies Thr7 to Gly197. Cys84 serves as the catalytic Nucleophile. Residues His171 and Glu173 contribute to the active site. In terms of domain architecture, GMPS ATP-PPase spans Trp198 to Arg387. Position 225–231 (Ser225–Ser231) interacts with ATP.

In terms of assembly, homodimer.

It catalyses the reaction XMP + L-glutamine + ATP + H2O = GMP + L-glutamate + AMP + diphosphate + 2 H(+). Its pathway is purine metabolism; GMP biosynthesis; GMP from XMP (L-Gln route): step 1/1. In terms of biological role, catalyzes the synthesis of GMP from XMP. The polypeptide is GMP synthase [glutamine-hydrolyzing] (Bacillus cereus (strain ATCC 10987 / NRS 248)).